The following is a 361-amino-acid chain: Peptide chain release factor 1 (361 aa).

Q237 is modified (N5-methylglutamine). Residues 287–297 (KQQKEQSDTRK) are compositionally biased toward basic and acidic residues. The tract at residues 287–313 (KQQKEQSDTRKSLVGSGDRSERIRTYN) is disordered.

Belongs to the prokaryotic/mitochondrial release factor family. Post-translationally, methylated by PrmC. Methylation increases the termination efficiency of RF1.

It localises to the cytoplasm. In terms of biological role, peptide chain release factor 1 directs the termination of translation in response to the peptide chain termination codons UAG and UAA. This Francisella tularensis subsp. tularensis (strain FSC 198) protein is Peptide chain release factor 1.